Consider the following 144-residue polypeptide: Granulocyte-macrophage colony-stimulating factor (144 aa).

An N-terminal signal peptide occupies residues 1-17 (MWLQNLLLLGTVVCSIS). Ser24 carries an O-linked (GalNAc...) serine glycan. Residue Thr27 is glycosylated (O-linked (GalNAc...) threonine). 3 N-linked (GlcNAc...) asparagine glycosylation sites follow: Asn44, Asn47, and Asn54. 2 disulfides stabilise this stretch: Cys71–Cys113 and Cys105–Cys138.

The protein belongs to the GM-CSF family. As to quaternary structure, monomer. The signaling GM-CSF receptor complex is a dodecamer of two head-to-head hexamers of two alpha, two beta, and two ligand subunits.

It is found in the secreted. In terms of biological role, cytokine that stimulates the growth and differentiation of hematopoietic precursor cells from various lineages, including granulocytes, macrophages, eosinophils and erythrocytes. This chain is Granulocyte-macrophage colony-stimulating factor (CSF2), found in Sus scrofa (Pig).